Reading from the N-terminus, the 360-residue chain is A-type ATP synthase subunit C (360 aa).

This sequence belongs to the V-ATPase V0D/AC39 subunit family. As to quaternary structure, has multiple subunits, A(3), B(3), C, D, E, F, G, I and K(x); there may be a few other subunits as well.

It is found in the cell membrane. Functionally, component of the A-type ATP synthase that produces ATP from ADP in the presence of a proton gradient across the membrane. The polypeptide is A-type ATP synthase subunit C (Methanosarcina mazei (strain ATCC BAA-159 / DSM 3647 / Goe1 / Go1 / JCM 11833 / OCM 88) (Methanosarcina frisia)).